The chain runs to 900 residues: DNA mismatch repair protein MutS (900 aa).

Position 637–644 (637–644 (GPNMAGKS)) interacts with ATP.

Belongs to the DNA mismatch repair MutS family.

Its function is as follows. This protein is involved in the repair of mismatches in DNA. It is possible that it carries out the mismatch recognition step. This protein has a weak ATPase activity. The protein is DNA mismatch repair protein MutS of Methanosarcina barkeri (strain Fusaro / DSM 804).